Here is a 1904-residue protein sequence, read N- to C-terminus: Voltage-dependent calcium channel type A subunit alpha-1 (1904 aa).

Positions 1-45 (MLGGVGGRHMSTRRRGSSPLVRGGAGLTGYAGPGASGNSNDVAAI) are disordered. Residues 23–35 (GGAGLTGYAGPGA) show a composition bias toward gly residues. Over 30–168 (YAGPGASGNS…KHTRFIIEWP (139 aa)) the chain is Cytoplasmic. Residues 155–447 (NCIRKHTRFI…LVLGVLSGEF (293 aa)) form an I repeat. A helical membrane pass occupies residues 169 to 187 (PFEYAVLLTIIANCVVLAL). Residues 188-205 (EEHLPKQDKTILAQKLEA) lie on the Extracellular side of the membrane. Residues 206–225 (TEIYFLGIFCVEASLKILAL) traverse the membrane as a helical segment. Residues 226–237 (GFVLHRGSYLRN) lie on the Cytoplasmic side of the membrane. Residues 238–259 (IWNIMDFFVVVTGFITAFSQGI) form a helical membrane-spanning segment. Topologically, residues 260-264 (ELDMD) are extracellular. The chain crosses the membrane as a helical span at residues 265–283 (LRTLRAIRVLRPLKLVSGI). The Cytoplasmic segment spans residues 284–302 (PSLQVVLKSIIKAMAPLLQ). A helical membrane pass occupies residues 303 to 322 (IGLLVLFAIVIFAIIGLEFY). The Extracellular segment spans residues 323 to 419 (SGTLHKTCYS…WTNDALGSTY (97 aa)). N-linked (GlcNAc...) asparagine glycosylation is found at N353 and N367. Residues 420–444 (NWIYFIPLIVLGSFFMLNLVLGVLS) traverse the membrane as a helical segment. The Cytoplasmic segment spans residues 445-568 (GEFAKEREKV…YWIRKSVKSQ (124 aa)). A disordered region spans residues 513-543 (KKLGKSKSTDTEEEEGDDDQDDGELSSSTKE). Positions 523–536 (TEEEEGDDDQDDGE) are enriched in acidic residues. One copy of the II repeat lies at 554-797 (EKRFRYWIRK…VFLAIAVDNL (244 aa)). Residues 569 to 587 (KFYWFVIVLVFFNTVCVAV) form a helical membrane-spanning segment. At 588–602 (EHYGQPQWLTDFLYF) the chain is on the extracellular side. Residues 603 to 622 (AEFVFLALFMLEMFIKVYAL) traverse the membrane as a helical segment. Topologically, residues 623 to 630 (GPRTYFDS) are cytoplasmic. A helical membrane pass occupies residues 631–649 (SFNRFDCVVISGSIFEVIW). The Extracellular portion of the chain corresponds to 650-658 (SEVKSGSFG). A helical transmembrane segment spans residues 659-677 (LSVLRALRLLRIFKVTKYW). The Cytoplasmic portion of the chain corresponds to 678 to 696 (KSLRNLVISLLSSMRSIIS). The helical transmembrane segment at 697-716 (LLFLLFLFILIFALLGMQLF) threads the bilayer. Residues 717–769 (GGQFNFDSGTPPTNFNTFPIALLTVFQILTGEDWNEVMYQGIESQGGHKKGMI) are Extracellular-facing. The chain crosses the membrane as a helical span at residues 770 to 794 (YSLYFIVLVLFGNYTLLNVFLAIAV). The Cytoplasmic portion of the chain corresponds to 795 to 895 (DNLANAQELS…VRRAAHWVVN (101 aa)). A disordered region spans residues 827-869 (QSLQNPKDGGAPKVEICPPNGKGGKQSSEEEKKQDEDDDTGPK). Residues 890 to 1177 (AHWVVNLRYF…IITFQEQGEA (288 aa)) form an III repeat. The chain crosses the membrane as a helical span at residues 896–914 (LRYFDFFIMVVISLSSIAL). The Extracellular segment spans residues 915-930 (AAEDPVWEDSPRNEVL). Residues 931 to 950 (NYFDYAFTGVFTVEMILKII) traverse the membrane as a helical segment. At 951-962 (DLGIILHPGSYL) the chain is on the cytoplasmic side. The chain crosses the membrane as a helical span at residues 963–981 (REFWNIMDAVVVICAAVSF). Topologically, residues 982 to 994 (AFDMTGSSAGQNL) are extracellular. N993 is a glycosylation site (N-linked (GlcNAc...) asparagine). Residues 995 to 1013 (STIKSLRVLRVLRPLKTIK) traverse the membrane as a helical segment. Residues 1014-1032 (RVPKLKAVFDCVVNSLKNV) are Cytoplasmic-facing. The helical transmembrane segment at 1033-1052 (INILIVYILFQFIFAVIAVQ) threads the bilayer. Residues 1053 to 1141 (LFNGKFFYCS…EDKGPIQNFR (89 aa)) are Extracellular-facing. The chain crosses the membrane as a helical span at residues 1142-1166 (IEMSIFYIVYFIVFPFFFVNIFVAL). Topologically, residues 1167–1221 (IIITFQEQGEAELQDGEIDKNQKSCIDFTIQARPLERYMPKERNSVKYKIWRIVV) are cytoplasmic. One copy of the IV repeat lies at 1214 to 1470 (YKIWRIVVST…DNFDYLTRDS (257 aa)). The helical transmembrane segment at 1222–1250 (STPFEYFIMGLIVLNTVLLMMKFHRQSDA) threads the bilayer. The Extracellular segment spans residues 1251 to 1255 (YKNTL). The helical transmembrane segment at 1256–1275 (KYMNMCFTGMFTVECILKIA) threads the bilayer. Residues 1276 to 1283 (AFGVRNFF) lie on the Cytoplasmic side of the membrane. The chain crosses the membrane as a helical span at residues 1284-1302 (KDAWNTFDFITVIGSIVDA). Topologically, residues 1303 to 1309 (LVIEFGE) are extracellular. A helical membrane pass occupies residues 1310 to 1328 (NFINVGFLRLFRAARLIKL). Topologically, residues 1329-1347 (LRQGYTIRILLWTFVQSFK) are cytoplasmic. Residues 1348-1367 (ALPYVCLLIAMLFFIYAIIG) form a helical membrane-spanning segment. Over 1368–1431 (MQVFGNIALD…AKAGKQEGGC (64 aa)) the chain is Extracellular. Residues 1430–1471 (GCGSNIAYAYFVSFIFFCSFLMLNLFVAVIMDNFDYLTRDSS) form a phenylalkylamine binding region. A helical transmembrane segment spans residues 1432 to 1456 (GSNIAYAYFVSFIFFCSFLMLNLFV). Residues 1457–1904 (AVIMDNFDYL…HSDSDEDDWC (448 aa)) are Cytoplasmic-facing. The EF-hand domain maps to 1476–1511 (HHLDEFVRIWAEYDPNATGKIHYTEMYDMLKNMDPP). 5 residues coordinate Ca(2+): D1489, N1491, T1493, K1495, and E1500. Disordered stretches follow at residues 1652 to 1694 (THTG…HEGP), 1710 to 1788 (THHP…HSYP), and 1870 to 1904 (GGRLLPSPVPNGYKPQPQAKQRTPRHSDSDEDDWC). The span at 1670–1681 (RSPSLRHSPGRP) shows a compositional bias: low complexity. Over residues 1682–1691 (GYDHHGHYYH) the composition is skewed to basic and acidic residues. The segment covering 1710–1725 (THHPHPSQYNHRHRMR) has biased composition (basic residues). Over residues 1727–1740 (PWSASTSPARTPSP) the composition is skewed to low complexity. Residues 1751 to 1762 (GTTSLEQRSRSP) show a composition bias toward polar residues. The span at 1771-1784 (PHTHQHYHRHHPHQ) shows a compositional bias: basic residues.

Belongs to the calcium channel alpha-1 subunit (TC 1.A.1.11) family. CACNA1I subfamily. In terms of assembly, interacts with CATSPER1 and CATSPER2, leading to suppress T-type calcium channel activity.

It is found in the membrane. In terms of biological role, voltage-sensitive calcium channels (VSCC) mediate the entry of calcium ions into excitable cells and are also involved in a variety of calcium-dependent processes, including muscle contraction, neurotransmitter release, gene expression, cell motility, cell division and cell death. This is Voltage-dependent calcium channel type A subunit alpha-1 (CAC) from Apis mellifera (Honeybee).